The chain runs to 340 residues: Uroporphyrinogen decarboxylase (340 aa).

Residues 23-27, Asp72, Tyr147, Thr202, and His316 contribute to the substrate site; that span reads RQAGR.

This sequence belongs to the uroporphyrinogen decarboxylase family. In terms of assembly, homodimer.

It localises to the cytoplasm. The catalysed reaction is uroporphyrinogen III + 4 H(+) = coproporphyrinogen III + 4 CO2. The protein operates within porphyrin-containing compound metabolism; protoporphyrin-IX biosynthesis; coproporphyrinogen-III from 5-aminolevulinate: step 4/4. Catalyzes the decarboxylation of four acetate groups of uroporphyrinogen-III to yield coproporphyrinogen-III. This chain is Uroporphyrinogen decarboxylase, found in Geobacter metallireducens (strain ATCC 53774 / DSM 7210 / GS-15).